The sequence spans 491 residues: Cytochrome P450 81F2 (491 aa).

Residues 283–303 traverse the membrane as a helical segment; the sequence is VIIKGLMLSMMLAGTDTAAVT. Residue Cys429 participates in heme binding.

This sequence belongs to the cytochrome P450 family. Requires heme as cofactor.

It localises to the membrane. Its pathway is secondary metabolite biosynthesis. Involved in indole glucosinolate biosynthesis. Catalyzes hydroxylation reactions of the glucosinolate indole ring. Converts indol-3-yl-methylglucosinolate (I3M) to 4-hydroxy-indol-3-yl-methylglucosinolate (4OH-I3M) and/or 1-hydroxy-indol-3-yl-methylglucosinolate (1OH-I3M) intermediates. These hydroxy intermediates are converted to 4-methoxy-indol-3-yl-methylglucosinolate (4MO-I3M) and 1-methoxy-indol-3-yl-methylglucosinolate (1MO-I3M) by indole glucosinolate methyltransferase 1 and 2 (IGMT1 and IGMT2). Contributes to defense against the green peach aphid (Myzus persicae), a generalist phloem-feeding herbivore. Required for the biosynthesis of antifungal indole glucosinolate metabolites. Required for the pathogen-induced accumulation of 4MO-I3M, which in turn is activated by the atypical BGLU26/PEN2 myrosinase. Required for the biosynthesis of Trp-derived antifungal compounds and non-host resistance to the necrotrophic fungal pathogen Plectosphaerella cucumerina. Required for resistance to the non-adapted fungal pathogen Colletotrichum gloeosporioides. The protein is Cytochrome P450 81F2 of Arabidopsis thaliana (Mouse-ear cress).